Here is a 323-residue protein sequence, read N- to C-terminus: Digestive cysteine proteinase 2 (323 aa).

An N-terminal signal peptide occupies residues 1–16; that stretch reads MKVAVLFLCGVALAAA. A propeptide spans 17-107 (activation peptide); sequence SPSWEHFKGK…FYPKKETGPQ (91 aa). Disulfide bonds link Cys-128–Cys-171, Cys-162–Cys-204, and Cys-263–Cys-312. Cys-131 is a catalytic residue. Active-site residues include His-270 and Asn-290.

Belongs to the peptidase C1 family.

Its activity is regulated as follows. Inhibited by E-64, antipain, leupeptin, heavy metal ions, iodoacetic acid, dithionitrobenzene, p-hydroxymercuri-benzoate; activated by mercaptoethanol and dithiothreitol. This chain is Digestive cysteine proteinase 2 (LCP2), found in Homarus americanus (American lobster).